We begin with the raw amino-acid sequence, 319 residues long: DNA-directed RNA polymerases IV and V subunit 3B (319 aa).

Met1 carries the post-translational modification N-acetylmethionine.

This sequence belongs to the archaeal Rpo3/eukaryotic RPB3 RNA polymerase subunit family. Component of the RNA polymerase IV and V complexes. Interacts with NRPB11, SHH1, GRP23 and NRPD1.

The protein localises to the nucleus. DNA-dependent RNA polymerase catalyzes the transcription of DNA into RNA using the four ribonucleoside triphosphates as substrates. Component of RNA polymerases IV and V which mediate short-interfering RNAs (siRNA) accumulation and subsequent RNA-directed DNA methylation-dependent (RdDM) transcriptional gene silencing (TGS) of endogenous repeated sequences, including transposable elements. The polypeptide is DNA-directed RNA polymerases IV and V subunit 3B (NRPD3B) (Arabidopsis thaliana (Mouse-ear cress)).